The sequence spans 123 residues: MVVQDPLLCDLPIQVTLEEVNSQIALEYGQAMTVRVCKMDGEVMPVVVVQNATVLDLKKAIQRYVQLRQEREGGIQHISWSYVWRTYHLTSAGEKLTEDRKKLRDYGIRNRDEVSFIKKLRQK.

The Ubiquitin-like domain maps to 32-123; the sequence is MTVRVCKMDG…VSFIKKLRQK (92 aa).

As to quaternary structure, component of the U11/U12 snRNPs that are part of the U12-type spliceosome.

It localises to the nucleus. The sequence is that of U11/U12 small nuclear ribonucleoprotein 25 kDa protein (SNRNP25) from Bos taurus (Bovine).